A 335-amino-acid polypeptide reads, in one-letter code: Cathepsin B (335 aa).

The N-terminal stretch at 1-17 is a signal peptide; it reads MWRLLATLSCLVLLTSA. The propeptide at 18–79 is activation peptide; sequence RESLHFQPLS…QRAAFAADMI (62 aa). 6 disulfides stabilise this stretch: C93–C122, C105–C150, C141–C207, C142–C146, C179–C211, and C187–C198. C108 is a catalytic residue. An N-linked (GlcNAc...) asparagine glycan is attached at N192. K220 is modified (N6-acetyllysine). A disulfide bridge connects residues C227 and C331. Active-site residues include H278 and N298. Residues 333-335 constitute a propeptide that is removed on maturation; sequence PHF.

It belongs to the peptidase C1 family. In terms of assembly, dimer of a heavy chain and a light chain cross-linked by a disulfide bond. Interacts with SRPX2. Directly interacts with SHKBP1. Expressed in heart (at protein level).

The protein localises to the lysosome. The protein resides in the melanosome. It localises to the secreted. It is found in the extracellular space. Its subcellular location is the apical cell membrane. The enzyme catalyses Hydrolysis of proteins with broad specificity for peptide bonds. Preferentially cleaves -Arg-Arg-|-Xaa bonds in small molecule substrates (thus differing from cathepsin L). In addition to being an endopeptidase, shows peptidyl-dipeptidase activity, liberating C-terminal dipeptides.. Its function is as follows. Thiol protease which is believed to participate in intracellular degradation and turnover of proteins. Cleaves matrix extracellular phosphoglycoprotein MEPE. Involved in the solubilization of cross-linked TG/thyroglobulin in the thyroid follicle lumen. Has also been implicated in tumor invasion and metastasis. This Sus scrofa (Pig) protein is Cathepsin B (CTSB).